Reading from the N-terminus, the 61-residue chain is Large ribosomal subunit protein uL30 (61 aa).

It belongs to the universal ribosomal protein uL30 family. Part of the 50S ribosomal subunit.

The polypeptide is Large ribosomal subunit protein uL30 (Nitrosomonas eutropha (strain DSM 101675 / C91 / Nm57)).